The chain runs to 338 residues: Tetraacyldisaccharide 4'-kinase (338 aa).

51–58 (HLGGAGKT) provides a ligand contact to ATP.

This sequence belongs to the LpxK family.

It catalyses the reaction a lipid A disaccharide + ATP = a lipid IVA + ADP + H(+). Its pathway is glycolipid biosynthesis; lipid IV(A) biosynthesis; lipid IV(A) from (3R)-3-hydroxytetradecanoyl-[acyl-carrier-protein] and UDP-N-acetyl-alpha-D-glucosamine: step 6/6. Its function is as follows. Transfers the gamma-phosphate of ATP to the 4'-position of a tetraacyldisaccharide 1-phosphate intermediate (termed DS-1-P) to form tetraacyldisaccharide 1,4'-bis-phosphate (lipid IVA). This Rhodopseudomonas palustris (strain HaA2) protein is Tetraacyldisaccharide 4'-kinase.